A 145-amino-acid polypeptide reads, in one-letter code: Conglutin (145 aa).

Residues 1-21 (MAKSTILVALLALVLVAHASA) form the signal peptide. 5 disulfide bridges follow: C35–C92, C47–C79, C80–C128, C94–C136, and C105–C145.

The protein belongs to the 2S seed storage albumins family. In terms of tissue distribution, expressed in seeds. Not expressed in roots, pegs (budding ovaries) or leaves.

The polypeptide is Conglutin (Arachis hypogaea (Peanut)).